A 154-amino-acid polypeptide reads, in one-letter code: Large ribosomal subunit protein uL13 (154 aa).

This sequence belongs to the universal ribosomal protein uL13 family. As to quaternary structure, part of the 50S ribosomal subunit.

This protein is one of the early assembly proteins of the 50S ribosomal subunit, although it is not seen to bind rRNA by itself. It is important during the early stages of 50S assembly. The protein is Large ribosomal subunit protein uL13 of Brucella abortus (strain S19).